The primary structure comprises 635 residues: Threonine--tRNA ligase (635 aa).

One can recognise a TGS domain in the interval 1–61; sequence MIQITLPDAS…EKDSALSIIT (61 aa). Positions 242–533 are catalytic; the sequence is DHRKLGKELD…LIEEHAGALP (292 aa). The Zn(2+) site is built by cysteine 333, histidine 384, and histidine 510.

The protein belongs to the class-II aminoacyl-tRNA synthetase family. In terms of assembly, homodimer. It depends on Zn(2+) as a cofactor.

It localises to the cytoplasm. The enzyme catalyses tRNA(Thr) + L-threonine + ATP = L-threonyl-tRNA(Thr) + AMP + diphosphate + H(+). In terms of biological role, catalyzes the attachment of threonine to tRNA(Thr) in a two-step reaction: L-threonine is first activated by ATP to form Thr-AMP and then transferred to the acceptor end of tRNA(Thr). Also edits incorrectly charged L-seryl-tRNA(Thr). This is Threonine--tRNA ligase from Polaromonas sp. (strain JS666 / ATCC BAA-500).